Consider the following 89-residue polypeptide: UPF0367 protein PMM0124 (89 aa).

It belongs to the UPF0367 family.

The sequence is that of UPF0367 protein PMM0124 from Prochlorococcus marinus subsp. pastoris (strain CCMP1986 / NIES-2087 / MED4).